A 95-amino-acid chain; its full sequence is Protein TusB (95 aa).

This sequence belongs to the DsrH/TusB family. Heterohexamer, formed by a dimer of trimers. The hexameric TusBCD complex contains 2 copies each of TusB, TusC and TusD. The TusBCD complex interacts with TusE.

Its subcellular location is the cytoplasm. Its function is as follows. Part of a sulfur-relay system required for 2-thiolation of 5-methylaminomethyl-2-thiouridine (mnm(5)s(2)U) at tRNA wobble positions. This is Protein TusB from Buchnera aphidicola subsp. Acyrthosiphon pisum (strain 5A).